A 361-amino-acid chain; its full sequence is Chorismate synthase (361 aa).

The NADP(+) site is built by R48 and R54. FMN contacts are provided by residues 125–127 (RSS), 238–239 (NA), G278, 293–297 (KPTSS), and R319.

The protein belongs to the chorismate synthase family. Homotetramer. It depends on FMNH2 as a cofactor.

It carries out the reaction 5-O-(1-carboxyvinyl)-3-phosphoshikimate = chorismate + phosphate. Its pathway is metabolic intermediate biosynthesis; chorismate biosynthesis; chorismate from D-erythrose 4-phosphate and phosphoenolpyruvate: step 7/7. Catalyzes the anti-1,4-elimination of the C-3 phosphate and the C-6 proR hydrogen from 5-enolpyruvylshikimate-3-phosphate (EPSP) to yield chorismate, which is the branch point compound that serves as the starting substrate for the three terminal pathways of aromatic amino acid biosynthesis. This reaction introduces a second double bond into the aromatic ring system. This Shigella boydii serotype 18 (strain CDC 3083-94 / BS512) protein is Chorismate synthase.